A 1061-amino-acid polypeptide reads, in one-letter code: E3 ubiquitin-protein ligase Smurf1 (1061 aa).

The 116-residue stretch at 1–116 folds into the C2 domain; the sequence is MNKLDYPRRN…KGAGFQRLDL (116 aa). Disordered stretches follow at residues 143–176 and 188–496; these read SGNP…WEER and HATK…SGQR. The WW 1 domain occupies 167-200; it reads DSLPEGWEERRTDNGRVYYVNHATKSTQWDRPRQ. Polar residues-rich tracts occupy residues 207–225 and 233–255; these read SHAT…NSGD and TRST…SVTA. Serine 262 carries the post-translational modification Phosphoserine. The span at 264–273 shows a compositional bias: polar residues; the sequence is EILSSVGKEN. 2 stretches are compositionally biased toward low complexity: residues 274–300 and 311–322; these read TSPT…SAGG and PATPTSSTTSAS. The segment covering 348 to 359 has biased composition (polar residues); that stretch reads TPTSPTGQQNYV. The span at 360–378 shows a compositional bias: low complexity; that stretch reads NGNAQNGSTSGNGSGQAAQ. The segment covering 379–392 has biased composition (polar residues); the sequence is PQSASNGWTQEDAA. Residues 393 to 409 show a composition bias toward low complexity; that stretch reads TTTSPSTTTSPPRHSQS. Threonine 412 is modified (phosphothreonine). Phosphoserine is present on serine 416. Positions 417–439 are enriched in polar residues; sequence PPASVTPSANGNVHSPNANSTPA. Over residues 480–494 the composition is skewed to gly residues; that stretch reads RNGGTSGGGGGGGSG. WW domains follow at residues 513 to 546 and 561 to 594; these read LDLP…DPRI and GPLP…DPRL. The interval 513–602 is interaction with MAD; that stretch reads LDLPPGYEMR…RLSGSILQMI (90 aa). Composition is skewed to low complexity over residues 608-617 and 624-656; these read PPTSAANAGT and TPAT…TNPP. The segment at 608-661 is disordered; the sequence is PPTSAANAGTPAPPSATPATPSAAAAVPPQATPASNATPTTLTTTTNPPHRIVP. The 339-residue stretch at 723–1061 folds into the HECT domain; the sequence is RAKDMRKRLM…VEETCGFAVE (339 aa). Cysteine 1029 (glycyl thioester intermediate) is an active-site residue.

As to quaternary structure, interacts with phosphorylated MAD.

The enzyme catalyses S-ubiquitinyl-[E2 ubiquitin-conjugating enzyme]-L-cysteine + [acceptor protein]-L-lysine = [E2 ubiquitin-conjugating enzyme]-L-cysteine + N(6)-ubiquitinyl-[acceptor protein]-L-lysine.. It functions in the pathway protein modification; protein ubiquitination. Functionally, E3 ubiquitin-protein ligase which accepts ubiquitin from an E2 ubiquitin-conjugating enzyme in the form of a thioester and then directly transfers the ubiquitin to targeted substrates. Down-regulates Dpp signaling after gastrulation by promoting MAD ubiquitination and subsequent degradation. This chain is E3 ubiquitin-protein ligase Smurf1, found in Drosophila melanogaster (Fruit fly).